The following is a 128-amino-acid chain: Small ribosomal subunit protein eS6 (128 aa).

The protein belongs to the eukaryotic ribosomal protein eS6 family.

This Thermoplasma volcanium (strain ATCC 51530 / DSM 4299 / JCM 9571 / NBRC 15438 / GSS1) protein is Small ribosomal subunit protein eS6.